Consider the following 124-residue polypeptide: Small ribosomal subunit protein uS12 (124 aa).

Asp89 carries the 3-methylthioaspartic acid modification.

Belongs to the universal ribosomal protein uS12 family. In terms of assembly, part of the 30S ribosomal subunit. Contacts proteins S8 and S17. May interact with IF1 in the 30S initiation complex.

Its function is as follows. With S4 and S5 plays an important role in translational accuracy. In terms of biological role, interacts with and stabilizes bases of the 16S rRNA that are involved in tRNA selection in the A site and with the mRNA backbone. Located at the interface of the 30S and 50S subunits, it traverses the body of the 30S subunit contacting proteins on the other side and probably holding the rRNA structure together. The combined cluster of proteins S8, S12 and S17 appears to hold together the shoulder and platform of the 30S subunit. This chain is Small ribosomal subunit protein uS12, found in Yersinia enterocolitica serotype O:8 / biotype 1B (strain NCTC 13174 / 8081).